The primary structure comprises 357 residues: MQILEEKPKEGIVKVKAETLDDLWHLYHVIDPGDVVYAKTLRKQAQRSDSLRAEKVEVIPVYLGVKAEKINFHKFANQVRVTGPIVYASRDDVPLGKYHTITIEEGTVVTIQKPRWKEHHIERLKEAIEASKRAKVMIVVIDEGEADIALVREYGVEMVASIRRNLGGKRYNTDRESEEKRFFHDLAKTMAELMEREKIEKAIVAGPGFVKEDFHKFLRENYPELAKKVVIEDTSVTGRTGIYEVIKRGTVDRVYHENRVAKEVQLVEKVLEHVARNTGLATYGLREVEEAVNYGAVETLLVLDELLKGEHRERIEELMDAVRYARGEVVIVSSEHEGGEKLKALGGLAALLRFRVK.

This sequence belongs to the eukaryotic release factor 1 family. Pelota subfamily. In terms of assembly, monomer. A divalent metal cation serves as cofactor.

Its subcellular location is the cytoplasm. Its function is as follows. May function in recognizing stalled ribosomes, interact with stem-loop structures in stalled mRNA molecules, and effect endonucleolytic cleavage of the mRNA. May play a role in the release non-functional ribosomes and degradation of damaged mRNAs. Has endoribonuclease activity. The polypeptide is Protein pelota homolog (Thermococcus gammatolerans (strain DSM 15229 / JCM 11827 / EJ3)).